A 300-amino-acid chain; its full sequence is Hydroxyquinol 1,2-dioxygenase (300 aa).

4 residues coordinate Fe cation: Y167, Y200, H224, and H226.

This sequence belongs to the intradiol ring-cleavage dioxygenase family. The cofactor is Fe(3+).

It carries out the reaction benzene-1,2,4-triol + O2 = maleylacetate + 2 H(+). It participates in aromatic compound metabolism. It functions in the pathway xenobiotic degradation. Functionally, involved in the degradation of para-nitrophenol (4-NP). Catalyzes the conversion of hydroxyquinol to malelylacetate. The sequence is that of Hydroxyquinol 1,2-dioxygenase (npcC) from Rhodococcus opacus (Nocardia opaca).